Reading from the N-terminus, the 207-residue chain is Small ribosomal subunit protein uS4A (207 aa).

The S4 RNA-binding domain maps to 98–161 (RRLDNVVYRM…REHKRIKELA (64 aa)).

Belongs to the universal ribosomal protein uS4 family. Part of the 30S ribosomal subunit. Contacts protein S5. The interaction surface between S4 and S5 is involved in control of translational fidelity.

One of the primary rRNA binding proteins, it binds directly to 16S rRNA where it nucleates assembly of the body of the 30S subunit. Functionally, with S5 and S12 plays an important role in translational accuracy. The chain is Small ribosomal subunit protein uS4A from Symbiobacterium thermophilum (strain DSM 24528 / JCM 14929 / IAM 14863 / T).